We begin with the raw amino-acid sequence, 117 residues long: Protein Wnt-10b (117 aa).

S1 carries O-palmitoleoyl serine; by PORCN lipidation. A disulfide bond links C83 and C98. An N-linked (GlcNAc...) asparagine glycan is attached at N84.

It belongs to the Wnt family. In terms of processing, palmitoleoylation is required for efficient binding to frizzled receptors. Depalmitoleoylation leads to Wnt signaling pathway inhibition.

The protein resides in the secreted. It localises to the extracellular space. The protein localises to the extracellular matrix. Its function is as follows. Member of the Wnt ligand gene family that encodes for secreted proteins, which activate the Wnt signaling cascade. Involved in neurogenesis. Performs a partially redundant function with wnt1 in the formation of the midbrain-hindbrain boundary (MHB) organizer. The chain is Protein Wnt-10b (WNT-10B) from Plethodon jordani (Red-cheeked salamander).